A 40-amino-acid chain; its full sequence is Beta-defensin 1 (40 aa).

Disulfide bonds link Cys7-Cys35, Cys14-Cys29, and Cys19-Cys36. Gly40 bears the Glycine amide mark.

As to quaternary structure, monomer. Homodimer.

It localises to the secreted. The protein localises to the membrane. Its function is as follows. Has antimicrobial activity against the Gram-positive bacteria methicillin-resistant S.aureus ATCC 33591 and L.monocytogenes EGD, the Gram-negative bacterium E.coli ML53p and the yeast C.albicans 820. Has no hemolytic activity towards human erythrocytes. This Emys orbicularis (European pond turtle) protein is Beta-defensin 1.